A 146-amino-acid chain; its full sequence is Hut operon positive regulatory protein (146 aa).

The protein belongs to the HutP family. In terms of assembly, homohexamer.

Its function is as follows. Antiterminator that binds to cis-acting regulatory sequences on the mRNA in the presence of histidine, thereby suppressing transcription termination and activating the hut operon for histidine utilization. This Bacillus anthracis (strain CDC 684 / NRRL 3495) protein is Hut operon positive regulatory protein.